We begin with the raw amino-acid sequence, 401 residues long: Large ribosomal subunit protein uL4B (401 aa).

The segment covering 351-373 (IKAKEKKPDDGKPKAKKPLDAKT) has biased composition (basic and acidic residues). Positions 351-401 (IKAKEKKPDDGKPKAKKPLDAKTKMIKLAKAKKRQARAEAKTAEAKTAESK) are disordered. Residues 374-385 (KMIKLAKAKKRQ) show a composition bias toward basic residues. Residues 386 to 401 (ARAEAKTAEAKTAESK) are compositionally biased toward basic and acidic residues.

The protein belongs to the universal ribosomal protein uL4 family. Component of the large ribosomal subunit.

Its subcellular location is the cytoplasm. Its function is as follows. Component of the large ribosomal subunit. The ribosome is a large ribonucleoprotein complex responsible for the synthesis of proteins in the cell. In Xenopus laevis (African clawed frog), this protein is Large ribosomal subunit protein uL4B (rpl4-b).